The following is a 481-amino-acid chain: tRNA-2-methylthio-N(6)-dimethylallyladenosine synthase (481 aa).

An MTTase N-terminal domain is found at 24-140 (RKLFIESYGC…LPNLINEVEE (117 aa)). The [4Fe-4S] cluster site is built by Cys33, Cys69, Cys103, Cys178, Cys182, and Cys185. Positions 164–410 (QSNGVSAFVS…VDLQQKHSKQ (247 aa)) constitute a Radical SAM core domain. Positions 413-476 (NSVIGTTVEV…SATLIGEPIG (64 aa)) constitute a TRAM domain.

Belongs to the methylthiotransferase family. MiaB subfamily. As to quaternary structure, monomer. [4Fe-4S] cluster serves as cofactor.

It is found in the cytoplasm. The catalysed reaction is N(6)-dimethylallyladenosine(37) in tRNA + (sulfur carrier)-SH + AH2 + 2 S-adenosyl-L-methionine = 2-methylsulfanyl-N(6)-dimethylallyladenosine(37) in tRNA + (sulfur carrier)-H + 5'-deoxyadenosine + L-methionine + A + S-adenosyl-L-homocysteine + 2 H(+). In terms of biological role, catalyzes the methylthiolation of N6-(dimethylallyl)adenosine (i(6)A), leading to the formation of 2-methylthio-N6-(dimethylallyl)adenosine (ms(2)i(6)A) at position 37 in tRNAs that read codons beginning with uridine. This Christiangramia forsetii (strain DSM 17595 / CGMCC 1.15422 / KT0803) (Gramella forsetii) protein is tRNA-2-methylthio-N(6)-dimethylallyladenosine synthase.